The following is a 747-amino-acid chain: AMP deaminase 1 (747 aa).

Residue Thr-81 is modified to Phosphothreonine. At Ser-85 the chain carries Phosphoserine. Position 216 is a phosphotyrosine (Tyr-216). Zn(2+) is bound by residues His-303 and His-305. Residues His-305 and 374-379 (KFNDKY) contribute to the substrate site. Position 441 is a phosphoserine (Ser-441). Position 572 (His-572) interacts with Zn(2+). Glu-575 contributes to the substrate binding site. His-594 functions as the Proton acceptor in the catalytic mechanism. Asp-649 contributes to the Zn(2+) binding site. A substrate-binding site is contributed by 650 to 653 (DPMQ).

This sequence belongs to the metallo-dependent hydrolases superfamily. Adenosine and AMP deaminases family. In terms of assembly, homotetramer. The cofactor is Zn(2+).

It carries out the reaction AMP + H2O + H(+) = IMP + NH4(+). The protein operates within purine metabolism; IMP biosynthesis via salvage pathway; IMP from AMP: step 1/1. Functionally, AMP deaminase plays a critical role in energy metabolism. This Rattus norvegicus (Rat) protein is AMP deaminase 1.